Consider the following 593-residue polypeptide: UvrABC system protein C (593 aa).

The GIY-YIG domain maps to 14 to 91 (DSPGCYLHKD…IQENMPKYNI (78 aa)). The region spanning 196-231 (NKIVNGLTEKMKSAAMTMEFERAAEYRDLIEAISLL) is the UVR domain.

It belongs to the UvrC family. Interacts with UvrB in an incision complex.

The protein resides in the cytoplasm. In terms of biological role, the UvrABC repair system catalyzes the recognition and processing of DNA lesions. UvrC both incises the 5' and 3' sides of the lesion. The N-terminal half is responsible for the 3' incision and the C-terminal half is responsible for the 5' incision. This Streptococcus agalactiae serotype III (strain NEM316) protein is UvrABC system protein C.